Here is a 2006-residue protein sequence, read N- to C-terminus: Supporter of activation of yellow protein (2006 aa).

Disordered regions lie at residues 1 to 208, 313 to 347, 458 to 564, 744 to 794, 821 to 916, 929 to 1029, 1044 to 1082, and 1099 to 1196; these read MNDL…RRVE, MPAK…SSLA, EEKP…AQSQ, DTQD…DPAR, DLEG…KSRR, VSVG…NNNS, CSSS…SDPL, and QQLR…SAVA. The span at 10-60 shows a compositional bias: low complexity; sequence VAATSSSGSESGTAVESAAATSTAGSAGAAGRPQSNCSANSNAKSVAASST. Polar residues predominate over residues 67–81; sequence VSSTSSPAQRDQQLN. The segment covering 118–128 has biased composition (pro residues); sequence SPPPTLPPPTT. A compositionally biased stretch (low complexity) spans 129–168; the sequence is PCDDAPSTTGASASASSASGEAPSAASAAGAAGGPMAATA. Polar residues predominate over residues 189-199; sequence ANPNSNANESQ. A compositionally biased stretch (low complexity) spans 321–347; that stretch reads LSSLSPASASSSSASSSSSSSSSSSLA. A compositionally biased stretch (polar residues) spans 485 to 494; it reads GGESNSSSQE. Over residues 525-534 the composition is skewed to basic and acidic residues; the sequence is SLSKEHDPKI. Low complexity predominate over residues 543-563; it reads ASNGIASGGSKASKASKSAQS. Residues 744-758 are compositionally biased toward basic and acidic residues; sequence DTQDNNNENHLKRTN. Composition is skewed to polar residues over residues 759 to 769 and 828 to 844; these read SEGNESPSSRL and PPTQ…NGAL. The span at 861–870 shows a compositional bias: pro residues; it reads PATPQPPPVA. 2 stretches are compositionally biased toward basic and acidic residues: residues 936-945 and 963-972; these read ADMKAKEKES and ESPKTRDHRP. Low complexity-rich tracts occupy residues 978-990 and 1018-1029; these read RTTT…LQPT and SSESESNNNNNS. Residues 1053–1080 are compositionally biased toward polar residues; it reads GAAANQQVIGGSGSSSMLPPTTILSSSD. The segment covering 1103 to 1112 has biased composition (low complexity); that stretch reads SSRPSSISCG. Residues 1147–1158 show a composition bias toward basic residues; it reads GRGRGRRSRGGR. The span at 1161–1173 shows a compositional bias: low complexity; the sequence is GSSSVDRAVSVGG. The segment at 1340–1573 is SAY; it reads MIQEQVALYL…PPTDLMAQLL (234 aa). The interval 1579-1685 is disordered; that stretch reads AVGSDEIKTS…AGSEDEDGNE (107 aa). Low complexity-rich tracts occupy residues 1627–1652 and 1660–1677; these read TASS…SSDT and FSST…SGAG. A PHD-type 1; degenerate zinc finger spans residues 1694–1751; it reads TCGVCLRSQHRNARDMPEAFIRCYTCRKRVHPSCVDMPPRMVGRVRNYNWQCAGCKCC. A PHD-type 2; degenerate zinc finger spans residues 1753-1796; the sequence is KCRSSQRPGKMLYCEQCDRGYHIYCLGLRTVPDGRWSCERCCFC. Positions 1887–1911 are disordered; sequence TSAQTDDSPMPSPGLTTNGGRALSP.

The protein belongs to the SAYP family. Widely expressed. Highly expressed in ovary. Expressed in nursing cells and growing oocytes at all stages of development and accumulates in mature oocytes. Expressed in the nuclei of syncytium blastoderm of early embryos and in the nuclei of different tissues of late embryos, larvae, and adults.

The protein localises to the nucleus. It localises to the cytoplasm. The protein resides in the chromosome. Its function is as follows. Essential transcription regulator during early development. Coactivates transcription of some euchromatin genes and repress transcription in of euchromatin genes translocated to heterochromatin. The sequence is that of Supporter of activation of yellow protein (e(y)3) from Drosophila melanogaster (Fruit fly).